We begin with the raw amino-acid sequence, 527 residues long: MFGLLVNFYRFCRKKTERKITIALLGLDNAGKTTLLNSIQGEVDRDTTPTFGFNSTTLNEGKYKIEVFDLGGGKNIRGVWKKYLAEVHAIVYVVDAADPGRFEESKMTMAEVLENQFMRDKPICIFANKQDLPTAAPAAEVVKGLGLATCRNSHNVFPCTAKMPAGQDVDHRLRDGLKWLVGTVDREFGRLDPRVQTEAEEVRQEEARKKKEREERLRKQREERLRQQKEEEERAREVEKENELHDGKAPSLLAAGGGVVGAAAAGVNGVMVDEQQELRPPGQHQEAPEALGLHNGLALGLPHTIESPGKFPPPPRRPLEAHPASDLRLVAPDQGVSSASGGPGLGAMPSGSHGGGGVPPQPASLPHVRAALPPLPPSAPQPSDAGVGSSGSASRHPGAHSSSAAAPPNVASGAAAEDGPEPDAAGTAAGEAGSGSVFAPRPASAGGGGPGSRGSGSGMTPDARELGSGGVESGEGTPARLRAGAQQASDGGHGNSKGSFSLVHTSNKVVPVAPDLRAGIPGAPNDA.

GTP-binding positions include 26-33 (GLDNAGKT), 69-73 (DLGGG), and 128-131 (NKQD). Residues 200–248 (EEVRQEEARKKKEREERLRKQREERLRQQKEEEERAREVEKENELHDGK) show a composition bias toward basic and acidic residues. Disordered stretches follow at residues 200 to 252 (EEVR…APSL) and 300 to 503 (GLPH…FSLV). Residues 381 to 444 (QPSDAGVGSS…GSVFAPRPAS (64 aa)) show a composition bias toward low complexity. A compositionally biased stretch (gly residues) spans 445–457 (AGGGGPGSRGSGS).

It belongs to the small GTPase superfamily. Arf family. Monomer.

The protein localises to the cell projection. It localises to the cilium membrane. Its function is as follows. Cilium-specific protein required to control the microtubule-based, ciliary axoneme structure. May act by maintaining the association between IFT subcomplexes A and B. In Chlamydomonas reinhardtii (Chlamydomonas smithii), this protein is ADP-ribosylation factor-like protein 13B (ARL13).